The chain runs to 601 residues: Aspartate--tRNA(Asp/Asn) ligase (601 aa).

Residue E173 coordinates L-aspartate. The tract at residues 197 to 200 is aspartate; it reads QLFK. R219 contacts L-aspartate. ATP contacts are provided by residues 219–221 and Q228; that span reads RDE. Residue H456 coordinates L-aspartate. An ATP-binding site is contributed by E490. Residue R497 coordinates L-aspartate. Residue 542–545 participates in ATP binding; that stretch reads GWDR. Residues 566-601 are disordered; the sequence is GGGYDPLTQAPAPITAEQRRESGVDAVPDDETAPQA. Over residues 592 to 601 the composition is skewed to acidic residues; that stretch reads VPDDETAPQA.

Belongs to the class-II aminoacyl-tRNA synthetase family. Type 1 subfamily. In terms of assembly, homodimer.

It is found in the cytoplasm. It carries out the reaction tRNA(Asx) + L-aspartate + ATP = L-aspartyl-tRNA(Asx) + AMP + diphosphate. Aspartyl-tRNA synthetase with relaxed tRNA specificity since it is able to aspartylate not only its cognate tRNA(Asp) but also tRNA(Asn). Reaction proceeds in two steps: L-aspartate is first activated by ATP to form Asp-AMP and then transferred to the acceptor end of tRNA(Asp/Asn). The polypeptide is Aspartate--tRNA(Asp/Asn) ligase (Beutenbergia cavernae (strain ATCC BAA-8 / DSM 12333 / CCUG 43141 / JCM 11478 / NBRC 16432 / NCIMB 13614 / HKI 0122)).